The following is a 175-amino-acid chain: MLDLGLSKMALIGVVALVVLGPERLPRVARTAGALFGRAQRYINDVKAEVSREIELDALRTMKTDFESAARNVETTIHDNLREHEKELNDTWHSAVGGLNEAAGDAGSTGSDTAAPSWRGSTAALAPKRRNWRVKQAAAPAWYKRATTRRTHVQSGAARVARHQPASLRRPTRFF.

The helical transmembrane segment at 1-21 (MLDLGLSKMALIGVVALVVLG) threads the bilayer. The disordered stretch occupies residues 155–175 (SGAARVARHQPASLRRPTRFF).

It belongs to the TatB family. In terms of assembly, the Tat system comprises two distinct complexes: a TatABC complex, containing multiple copies of TatA, TatB and TatC subunits, and a separate TatA complex, containing only TatA subunits. Substrates initially bind to the TatABC complex, which probably triggers association of the separate TatA complex to form the active translocon.

It is found in the cell inner membrane. In terms of biological role, part of the twin-arginine translocation (Tat) system that transports large folded proteins containing a characteristic twin-arginine motif in their signal peptide across membranes. Together with TatC, TatB is part of a receptor directly interacting with Tat signal peptides. TatB may form an oligomeric binding site that transiently accommodates folded Tat precursor proteins before their translocation. This is Sec-independent protein translocase protein TatB from Burkholderia lata (strain ATCC 17760 / DSM 23089 / LMG 22485 / NCIMB 9086 / R18194 / 383).